We begin with the raw amino-acid sequence, 232 residues long: Aquaporin Z (232 aa).

A run of 2 helical transmembrane segments spans residues 8-28 and 33-53; these read AFGT…AAGF and IGLL…AFAI. An NPA 1 motif is present at residues 62–64; the sequence is NPA. The next 3 helical transmembrane spans lie at 84–104, 130–150, and 159–179; these read IIAQ…IATG, MLAA…VIMG, and GFAP…SIPV. Residues 185-187 carry the NPA 2 motif; sequence NPA. A helical membrane pass occupies residues 201 to 221; the sequence is VSQLWLFWVAPIVGGVLGAVI.

Belongs to the MIP/aquaporin (TC 1.A.8) family. As to quaternary structure, homotetramer.

The protein localises to the cell inner membrane. The catalysed reaction is H2O(in) = H2O(out). Channel that permits osmotically driven movement of water in both directions. It is involved in the osmoregulation and in the maintenance of cell turgor during volume expansion in rapidly growing cells. It mediates rapid entry or exit of water in response to abrupt changes in osmolarity. The polypeptide is Aquaporin Z (Vibrio parahaemolyticus serotype O3:K6 (strain RIMD 2210633)).